Reading from the N-terminus, the 506-residue chain is Histidine ammonia-lyase (506 aa).

The segment at residues 144-146 is a cross-link (5-imidazolinone (Ala-Gly)); sequence ASG. A 2,3-didehydroalanine (Ser) modification is found at serine 145.

It belongs to the PAL/histidase family. Post-translationally, contains an active site 4-methylidene-imidazol-5-one (MIO), which is formed autocatalytically by cyclization and dehydration of residues Ala-Ser-Gly.

The protein localises to the cytoplasm. The catalysed reaction is L-histidine = trans-urocanate + NH4(+). It functions in the pathway amino-acid degradation; L-histidine degradation into L-glutamate; N-formimidoyl-L-glutamate from L-histidine: step 1/3. This is Histidine ammonia-lyase from Legionella pneumophila (strain Paris).